The primary structure comprises 732 residues: Segment polarity protein dishevelled homolog DVL-2 (732 aa).

Residues 1–82 (MAETKVIYHL…RVVSWLVSSE (82 aa)) enclose the DIX domain. Disordered stretches follow at residues 81 to 181 (SETS…SSST) and 195 to 237 (EEDD…SSFS). The segment covering 98 to 111 (DPPPVPPPVPPPPA) has biased composition (pro residues). Basic and acidic residues predominate over residues 146 to 157 (MRRDRVRRRDST). A compositionally biased stretch (polar residues) spans 202 to 213 (RFSSSTEQSSAS). Over residues 215 to 227 (LLKRHRRRRKQRP) the composition is skewed to basic residues. Residues 250 to 335 (TVTLNMEKYN…KPGPIILTVA (86 aa)) enclose the PDZ domain. In terms of domain architecture, DEP spans 424 to 498 (PESGLEVRDR…SEQCYYIFGD (75 aa)). Composition is skewed to low complexity over residues 570 to 589 (MGSAGSQHSEGSRSSGSNRS), 612 to 629 (KSGSGSESEYSTRSSIRR), and 637 to 647 (PPSERSTSSRP). Residues 570 to 660 (MGSAGSQHSE…HPPSVHSYAA (91 aa)) are disordered.

Belongs to the DSH family. As to quaternary structure, can form homomultimers. Interacts with prickle1. Interacts (via the PDZ domain) with ccdc88c/dal and dact1-B/dpr. Interacts (via the DIX domain) with ARP/Axin-related protein and dact1-A/frodo. Interacts with sdc4, possibly via fz7. Interacts directly (via the DEP domain) with efnb1/ephrin-B1. May interact indirectly with the phosphorylated ephrin receptors ephb1 and ephb2 via SH domain-containing adapters. Phosphorylated. Phosphorylation is controlled by frizzled proteins, correlates with the onset of embryo dorsalizing events and is higher in the dorsal half of early cleavage embryos. Phosphorylated on tyrosine residues in response to association with efnb1/ephrin-B1.

The protein resides in the cytoplasm. Its subcellular location is the cytoplasmic vesicle. The protein localises to the cell projection. It localises to the cilium. It is found in the nucleus. The protein resides in the cell membrane. Involved in at least 2 independent signaling cascades, controlling cell fate via canonical Wnt signaling and cell polarity via a planar cell polarity (PCP) cascade. Acts synergistically with dal/dapple-like to activate Wnt signaling, stabilizing ctnnb1/beta-catenin and leading to dorsal axis formation. Also prevents degradation of ctnnb1/beta-catenin by displacing gsk3 from a complex with ARP/Axin-related protein. Has an additional role in anterior-posterior (A/P) axis formation, specifying different neuroectodermal cell fates along the A/P axis in a dose-dependent manner by activating several early patterning genes. In the PCP pathway, required at the cell membrane for PCP-mediated neural and mesodermal convergent extension during gastrulation and subsequent neural tube closure, acting to activate jnk. Also involved in blastopore closure and archenteron elongation during early, but not late, gastrulation. Associates with ephrin receptors and ligands and acts as part of a downstream PCP pathway to mediate ephrin-mediated cell repulsion via activation of rhoa. Required for efnb1/ephrin-B1-driven movement of non-retinal progenitor cells into the retina during eye field formation. Patterns the hindbrain. Required for ciliogenesis. Controls the docking of basal bodies to the apical plasma membrane; mediates the activation, but not localization of rhoa at the apical surface of ciliated cells during basal body docking. Furthermore, required for the association of basal bodies with membrane-bound vesicles and the vesicle-trafficking protein exoc4/sec8, and this association is in turn required for basal body docking. Once basal bodies are docked, required for the planar polarization of basal bodies that underlies ciliary beating and the directional fluid flow across ciliated epithelia. In Xenopus tropicalis (Western clawed frog), this protein is Segment polarity protein dishevelled homolog DVL-2.